A 222-amino-acid chain; its full sequence is Zinc finger C2HC domain-containing protein 1B (222 aa).

The C2HC/C3H-type 1 zinc finger occupies 14–43 (ELFPCEVCGRRFAADVLERHGPICKKLFNR). Residues Cys-18, Cys-21, His-33, and Cys-37 each coordinate Zn(2+). The segment at 48-78 (FSSLKQRLQGTDIPTVKKTPQSKSPPVRKSN) is disordered. A C2HC/C3H-type 2; degenerate zinc finger spans residues 117 to 146 (DYIQRPYCMRRFNESAAERHTNFCKDQSSR). Residues 196–222 (PTKSGLAMDPASGAKLRQGFSKSSKKD) are disordered.

It belongs to the ZC2HC1 family. Zn(2+) serves as cofactor.

This is Zinc finger C2HC domain-containing protein 1B (ZC2HC1B) from Homo sapiens (Human).